A 475-amino-acid chain; its full sequence is Ribulose bisphosphate carboxylase large chain (475 aa).

Residues 1–2 (MS) constitute a propeptide that is removed on maturation. The residue at position 3 (Pro-3) is an N-acetylproline. Lys-14 is modified (N6,N6,N6-trimethyllysine). 2 residues coordinate substrate: Asn-123 and Thr-173. Catalysis depends on Lys-175, which acts as the Proton acceptor. Substrate is bound at residue Lys-177. The Mg(2+) site is built by Lys-201, Asp-203, and Glu-204. Lys-201 bears the N6-carboxylysine mark. His-294 functions as the Proton acceptor in the catalytic mechanism. Residues Arg-295, His-327, and Ser-379 each contribute to the substrate site.

This sequence belongs to the RuBisCO large chain family. Type I subfamily. As to quaternary structure, heterohexadecamer of 8 large chains and 8 small chains; disulfide-linked. The disulfide link is formed within the large subunit homodimers. It depends on Mg(2+) as a cofactor. In terms of processing, the disulfide bond which can form in the large chain dimeric partners within the hexadecamer appears to be associated with oxidative stress and protein turnover.

Its subcellular location is the plastid. It is found in the chloroplast. The catalysed reaction is 2 (2R)-3-phosphoglycerate + 2 H(+) = D-ribulose 1,5-bisphosphate + CO2 + H2O. It carries out the reaction D-ribulose 1,5-bisphosphate + O2 = 2-phosphoglycolate + (2R)-3-phosphoglycerate + 2 H(+). Its function is as follows. RuBisCO catalyzes two reactions: the carboxylation of D-ribulose 1,5-bisphosphate, the primary event in carbon dioxide fixation, as well as the oxidative fragmentation of the pentose substrate in the photorespiration process. Both reactions occur simultaneously and in competition at the same active site. This chain is Ribulose bisphosphate carboxylase large chain, found in Keteleeria davidiana (David's keteleeria).